The sequence spans 196 residues: Protein kinase OspG (196 aa).

Belongs to the protein kinase superfamily. Autophosphorylated.

It is found in the secreted. It localises to the host cell. Functionally, effector proteins function to alter host cell physiology and promote bacterial survival in host tissues. This protein is a kinase that is involved in down-regulation of the host innate response induced by invasive bacteria. The polypeptide is Protein kinase OspG (ospG) (Shigella flexneri serotype X (strain 2002017)).